The primary structure comprises 297 residues: uncharacterized protein (297 aa).

Residues 46 to 229 are disordered; sequence LGAGGPPPPP…RPPPYIAPPP (184 aa). Pro residues predominate over residues 65 to 81; it reads PEGPGGPPQHAPPNPPP. Positions 90 to 100 are enriched in gly residues; the sequence is RGGGAGGAGDG. Residues 106 to 117 show a composition bias toward acidic residues; that stretch reads DAAEEYGPEDLD. A compositionally biased stretch (basic residues) spans 137-151; that stretch reads HQTRGPGRRAKKRLR. Residues 184–201 show a composition bias toward low complexity; that stretch reads ATPQAAPAAKTTPASPQT. Positions 219–229 are enriched in pro residues; it reads HRPPPYIAPPP.

This is an uncharacterized protein from Torque teno virus (isolate Human/China/CT23F/2001) (TTV).